Reading from the N-terminus, the 318-residue chain is C1GALT1-specific chaperone 1 (318 aa).

At 1–6 the chain is on the cytoplasmic side; sequence MLSESS. A helical; Signal-anchor for type II membrane protein membrane pass occupies residues 7–26; sequence SFLKGVMLGSIFCALITMLG. Topologically, residues 27 to 318 are lumenal; the sequence is HIRIGHGSRM…FLPPNGSDND (292 aa).

The protein belongs to the glycosyltransferase 31 family. Beta3-Gal-T subfamily. In terms of assembly, associates with core 1 beta-3-galactosyltransferase (C1GALT1), probably not with the soluble active form.

The protein localises to the membrane. In terms of biological role, probable chaperone required for the generation of 1 O-glycan Gal-beta1-3GalNAc-alpha1-Ser/Thr (T antigen), which is a precursor for many extended O-glycans in glycoproteins. Probably acts as a specific molecular chaperone assisting the folding/stability of core 1 beta-3-galactosyltransferase (C1GALT1). In Bos taurus (Bovine), this protein is C1GALT1-specific chaperone 1 (C1GALT1C1).